The sequence spans 109 residues: Small ribosomal subunit protein uS10 (109 aa).

Belongs to the universal ribosomal protein uS10 family. In terms of assembly, part of the 30S ribosomal subunit.

Its function is as follows. Involved in the binding of tRNA to the ribosomes. This is Small ribosomal subunit protein uS10 from Koribacter versatilis (strain Ellin345).